Here is a 368-residue protein sequence, read N- to C-terminus: Isopentenyl-diphosphate delta-isomerase (368 aa).

7–8 (RK) contributes to the substrate binding site. FMN is bound by residues T65, 66-68 (GMT), S96, and N125. 96-98 (SQR) provides a ligand contact to substrate. A substrate-binding site is contributed by Q160. E161 serves as a coordination point for Mg(2+). FMN is bound by residues K193, S218, T223, 275–277 (GIR), and 296–297 (AL).

This sequence belongs to the IPP isomerase type 2 family. In terms of assembly, homooctamer. Dimer of tetramers. The cofactor is FMN. NADPH serves as cofactor. It depends on Mg(2+) as a cofactor.

It is found in the cytoplasm. The catalysed reaction is isopentenyl diphosphate = dimethylallyl diphosphate. In terms of biological role, involved in the biosynthesis of isoprenoids. Catalyzes the 1,3-allylic rearrangement of the homoallylic substrate isopentenyl (IPP) to its allylic isomer, dimethylallyl diphosphate (DMAPP). This Saccharolobus solfataricus (strain ATCC 35092 / DSM 1617 / JCM 11322 / P2) (Sulfolobus solfataricus) protein is Isopentenyl-diphosphate delta-isomerase.